Here is a 167-residue protein sequence, read N- to C-terminus: Ribonuclease P protein subunit p20 (167 aa).

The segment at 1 to 36 is disordered; sequence MMGSNYPEHGTKPRSAKYHKQQNHRVVRKQPPRPAV. Positions 12–31 are enriched in basic residues; sequence KPRSAKYHKQQNHRVVRKQP.

As to quaternary structure, interacts with Smn.

The protein resides in the nucleus. Its subcellular location is the nucleolus. It localises to the cytoplasm. The protein localises to the cytoplasmic granule. Component of ribonuclease P, a protein complex that generates mature tRNA molecules by cleaving their 5'-ends. Also a component of RNase MRP complex, which cleaves pre-rRNA sequences. This Drosophila melanogaster (Fruit fly) protein is Ribonuclease P protein subunit p20.